A 131-amino-acid polypeptide reads, in one-letter code: MSEIPADLYYTSEHEWVLRTGDDTVRVGITDYAQSALGDVVFVQLPDVGADVASGDAFGEVESTKSVSDLYAPVTAKVVAVNGDLEGSPELVNSDPYGEGWLVDLRVEAGTLDEALGGLLDAEGYRAVVTE.

In terms of domain architecture, Lipoyl-binding spans Thr-24–Arg-106. The residue at position 65 (Lys-65) is an N6-lipoyllysine.

This sequence belongs to the GcvH family. As to quaternary structure, the glycine cleavage system is composed of four proteins: P, T, L and H. (R)-lipoate is required as a cofactor.

Functionally, the glycine cleavage system catalyzes the degradation of glycine. The H protein shuttles the methylamine group of glycine from the P protein to the T protein. The chain is Glycine cleavage system H protein from Mycolicibacterium smegmatis (strain ATCC 700084 / mc(2)155) (Mycobacterium smegmatis).